Reading from the N-terminus, the 427-residue chain is Septin-8-A (427 aa).

The region spanning 39 to 305 is the Septin-type G domain; it reads QGFCFNILCV…ELYRRCKLEE (267 aa). Positions 49-56 are G1 motif; the sequence is GETGIGKS. GTP-binding positions include 49–56, G104, 185–193, G239, and R254; these read GETGIGKS and KADTISKSE. Positions 101 to 104 are G3 motif; the sequence is DTVG. Residues 184–187 are G4 motif; that stretch reads AKAD. Residues 320–409 adopt a coiled-coil conformation; sequence LQETYEAKRK…KAAMEALQSQ (90 aa). Residues 376 to 389 show a composition bias toward basic and acidic residues; sequence QEESKKVEDKRRDL. The disordered stretch occupies residues 376 to 427; it reads QEESKKVEDKRRDLEEEMNSFNRRKAAMEALQSQSFQATSQQPLKKDKDRKN. Residues 406–418 show a composition bias toward polar residues; it reads LQSQSFQATSQQP.

This sequence belongs to the TRAFAC class TrmE-Era-EngA-EngB-Septin-like GTPase superfamily. Septin GTPase family.

The protein is Septin-8-A (sept8-a) of Xenopus laevis (African clawed frog).